Consider the following 341-residue polypeptide: Tubulin beta chain (341 aa).

Residues Ser64, Gly68, Thr69, Gly70, Asn130, and Asn152 each contribute to the GTP site.

The protein belongs to the tubulin family. Dimer of alpha and beta chains. A typical microtubule is a hollow water-filled tube with an outer diameter of 25 nm and an inner diameter of 15 nM. Alpha-beta heterodimers associate head-to-tail to form protofilaments running lengthwise along the microtubule wall with the beta-tubulin subunit facing the microtubule plus end conferring a structural polarity. Microtubules usually have 13 protofilaments but different protofilament numbers can be found in some organisms and specialized cells. Mg(2+) is required as a cofactor.

It localises to the cytoplasm. The protein resides in the cytoskeleton. Tubulin is the major constituent of microtubules, a cylinder consisting of laterally associated linear protofilaments composed of alpha- and beta-tubulin heterodimers. Microtubules grow by the addition of GTP-tubulin dimers to the microtubule end, where a stabilizing cap forms. Below the cap, tubulin dimers are in GDP-bound state, owing to GTPase activity of alpha-tubulin. The sequence is that of Tubulin beta chain from Haliotis discus (Abalone).